The sequence spans 224 residues: Inhibitor of apoptosis protein (224 aa).

A BIR repeat occupies 29-92 (VDARNQSFAI…AFWSRNCGFM (64 aa)). Cys62, Cys65, His82, and Cys89 together coordinate Zn(2+).

It belongs to the asfivirus IAP family. Interacts with subunit p17 of host CASP3.

Its subcellular location is the host cytoplasm. The protein localises to the virion. Its function is as follows. Prevents apoptosis of host cell by inhibiting caspase-3/CASP3 activation to promote the viral replication. Also induces the activation of host NF-kappaB. The sequence is that of Inhibitor of apoptosis protein (p27) from African swine fever virus (isolate Tick/South Africa/Wildebeeslaagte M1/1996) (ASFV).